The following is a 396-amino-acid chain: Pre-mycofactocin synthase (396 aa).

An FMN hydroxy acid dehydrogenase domain is found at 1–383 (MAEAWFETVA…SPADILVPTG (383 aa)). Residues Ser108, Gln128, Thr156, and Lys254 each contribute to the FMN site. His278 functions as the Proton acceptor in the catalytic mechanism. Residues 309–313 (DGGIR) and 332–333 (GR) each bind FMN.

It belongs to the FMN-dependent alpha-hydroxy acid dehydrogenase family. It depends on FMN as a cofactor.

The catalysed reaction is 3-amino-5-[(4-hydroxyphenyl)methyl]-4,4-dimethyl-2-pyrrolidin-2-one + O2 + H2O = pre-mycofactocin + H2O2 + NH4(+). In terms of biological role, involved in the biosynthesis of the enzyme cofactor mycofactocin (MFT). Catalyzes the oxidative deamination of AHDP (3-amino-5-[(4-hydroxyphenyl)methyl]-4,4-dimethyl-2-pyrrolidin-2-one), forming an alpha-keto amide moiety on the resulting molecule, which is called pre-mycofactocin (PMFT). This reaction occurs via a 5-[(4-hydroxyphenyl)methyl]-3-imino-4,4-dimethylpyrrolidin-2-one intermediate, which converts to PMFT. The alpha-keto amide moiety is the redox-active center for the redox activity of mycofactocin. This chain is Pre-mycofactocin synthase (mftD), found in Mycobacterium tuberculosis (strain CDC 1551 / Oshkosh).